A 239-amino-acid chain; its full sequence is EF-hand domain-containing protein D2 (239 aa).

Residues 1–51 (MATDELASKLSRRLQMEDEGGEATEQPGLNGAAAAAAEAPDETAQALGSAD) form a disordered region. Ala2 carries the post-translational modification N-acetylalanine. Ser11 carries the post-translational modification Phosphoserine. Over residues 32-46 (AAAAAAEAPDETAQA) the composition is skewed to low complexity. Residues Ser73 and Ser75 each carry the phosphoserine modification. Phosphotyrosine is present on Tyr82. EF-hand domains follow at residues 91 to 126 (KQIKDMEKMFKQYDAGKDGFIDLMELKLMMEKLGAP) and 127 to 162 (QTHLGLKSMIQEVDEDFDSKLSFREFLLIFRKAAAG). Asp104, Asp108, Glu115, Asp140, Asp142, Asp144, Lys146, and Glu151 together coordinate Ca(2+). Lys232 carries the N6-acetyllysine modification.

As to quaternary structure, interacts with CASP9; with inactive form.

The protein resides in the membrane raft. In terms of biological role, may regulate B-cell receptor (BCR)-induced immature and primary B-cell apoptosis. Plays a role as negative regulator of the canonical NF-kappa-B-activating branch. Controls spontaneous apoptosis through the regulation of BCL2L1 abundance. This chain is EF-hand domain-containing protein D2 (Efhd2), found in Rattus norvegicus (Rat).